The primary structure comprises 207 residues: Outer-membrane lipoprotein LolB (207 aa).

Residues 1-21 form the signal peptide; the sequence is MPLPDFRLIRLLPLASLVLTA. Cys-22 carries the N-palmitoyl cysteine lipid modification. The S-diacylglycerol cysteine moiety is linked to residue Cys-22.

Belongs to the LolB family. Monomer.

Its subcellular location is the cell outer membrane. Plays a critical role in the incorporation of lipoproteins in the outer membrane after they are released by the LolA protein. The protein is Outer-membrane lipoprotein LolB of Escherichia fergusonii (strain ATCC 35469 / DSM 13698 / CCUG 18766 / IAM 14443 / JCM 21226 / LMG 7866 / NBRC 102419 / NCTC 12128 / CDC 0568-73).